Reading from the N-terminus, the 327-residue chain is Ferredoxin--NADP reductase (327 aa).

FAD is bound by residues T18, D37, Q45, Y50, A90, F124, D283, and S324.

The protein belongs to the ferredoxin--NADP reductase type 2 family. As to quaternary structure, homodimer. FAD serves as cofactor.

The catalysed reaction is 2 reduced [2Fe-2S]-[ferredoxin] + NADP(+) + H(+) = 2 oxidized [2Fe-2S]-[ferredoxin] + NADPH. This Saccharopolyspora erythraea (strain ATCC 11635 / DSM 40517 / JCM 4748 / NBRC 13426 / NCIMB 8594 / NRRL 2338) protein is Ferredoxin--NADP reductase.